Here is a 190-residue protein sequence, read N- to C-terminus: Female-specific histamine-binding protein 2 (190 aa).

Residues 1-19 (MKLLILSLALVLALSQVKG) form the signal peptide. Ser39, Asp43, Tyr55, Asp58, Trp61, Glu101, Phe117, Tyr119, Phe127, Asp139, Glu154, and Trp156 together coordinate histamine. Intrachain disulfides connect Cys67–Cys188 and Cys138–Cys167.

It belongs to the calycin superfamily. Histamine-binding salivary protein family. As to quaternary structure, monomer. Expressed in salivary glands.

The protein localises to the secreted. In terms of biological role, salivary tick protein that acts by scavenging histamine at the wound site, outcompeting histamine receptors for histamine, thereby overcoming host inflammatory responses. Binds histamine with a high-affinity (Kd=1.7 nM). Contains two binding histamine sites (H and L), that appear to bind histamine with differing affinities (high and low). In Rhipicephalus appendiculatus (Brown ear tick), this protein is Female-specific histamine-binding protein 2.